The following is a 293-amino-acid chain: Ethanolamine ammonia-lyase small subunit (293 aa).

2 residues coordinate adenosylcob(III)alamin: Val207 and Glu228.

It belongs to the EutC family. In terms of assembly, the basic unit is a heterodimer which dimerizes to form tetramers. The heterotetramers trimerize; 6 large subunits form a core ring with 6 small subunits projecting outwards. The cofactor is adenosylcob(III)alamin.

The protein resides in the bacterial microcompartment. It catalyses the reaction ethanolamine = acetaldehyde + NH4(+). The protein operates within amine and polyamine degradation; ethanolamine degradation. Functionally, catalyzes the deamination of various vicinal amino-alcohols to oxo compounds. Allows this organism to utilize ethanolamine as the sole source of nitrogen and carbon in the presence of external vitamin B12. This chain is Ethanolamine ammonia-lyase small subunit, found in Clostridioides difficile (strain 630) (Peptoclostridium difficile).